The following is a 168-amino-acid chain: Group 2 truncated hemoglobin 3-1 (168 aa).

H98 is a binding site for heme b.

This sequence belongs to the truncated hemoglobin family. Group II subfamily. As to quaternary structure, homodimer when ferric. In terms of tissue distribution, mainly expressed in root nodules, but barely in leaves, roots, stems, flowers and fruits.

Its function is as follows. Hemoglobin-like protein that exhibits an unusual concentration-independent binding of O(2) and CO. Required for general plant development and during nodulation. May promote shoot organogenesis from root explants. This chain is Group 2 truncated hemoglobin 3-1, found in Lotus japonicus (Lotus corniculatus var. japonicus).